The primary structure comprises 160 residues: V-type proton ATPase subunit c (160 aa).

Topologically, residues 1-8 are vacuolar; the sequence is MTELCPVY. Residues 9 to 31 form a helical membrane-spanning segment; the sequence is APFFGAIGCASAIIFTSLGAAYG. The Cytoplasmic segment spans residues 32–53; that stretch reads TAKSGVGICATCVLRPDLLFKN. A helical membrane pass occupies residues 54–74; the sequence is IVPVIMAGIIAIYGLVVSVLV. The Vacuolar segment spans residues 75–90; sequence CYSLGQKQALYTGFIQ. A helical membrane pass occupies residues 91–112; it reads LGAGLSVGLSGLAAGFAIGIVG. Topologically, residues 113-124 are cytoplasmic; it reads DAGVRGSSQQPR. A helical transmembrane segment spans residues 125-150; the sequence is LFVGMILILIFAEVLGLYGLIVALLL. The Vacuolar segment spans residues 151-160; sequence NSRATQDVVC.

Belongs to the V-ATPase proteolipid subunit family. V-ATPase is a heteromultimeric enzyme composed of a peripheral catalytic V1 complex (components A to H) attached to an integral membrane V0 proton pore complex (components: a, c, c', c'', d, e, f and VOA1). The decameric c-ring forms the proton-conducting pore, and is composed of eight proteolipid subunits c, one subunit c' and one subunit c''.

Its subcellular location is the vacuole membrane. Functionally, proton-conducting pore forming subunit of the V0 complex of vacuolar(H+)-ATPase (V-ATPase), a multisubunit enzyme composed of a peripheral complex (V1) that hydrolyzes ATP and a membrane integral complex (V0) that translocates protons. V-ATPase is responsible for acidifying and maintaining the pH of intracellular compartments. The sequence is that of V-type proton ATPase subunit c (VMA3) from Saccharomyces cerevisiae (strain ATCC 204508 / S288c) (Baker's yeast).